A 218-amino-acid chain; its full sequence is Holliday junction branch migration complex subunit RuvA (218 aa).

Positions 1–64 (MIGKITGRLE…EDVMQLFGFT (64 aa)) are domain I. A domain II region spans residues 65 to 143 (TLTEKEWHRL…SVMGMSDTQA (79 aa)). The segment at 144 to 164 (TVAAQSSDAVIETRAAPSPVV) is flexible linker. A domain III region spans residues 165–218 (QNPSAQAEALSALSNLGYAPGDAAAAVAQAAGELPDAETPDLIRAALKRLAPKG).

Belongs to the RuvA family. Homotetramer. Forms an RuvA(8)-RuvB(12)-Holliday junction (HJ) complex. HJ DNA is sandwiched between 2 RuvA tetramers; dsDNA enters through RuvA and exits via RuvB. An RuvB hexamer assembles on each DNA strand where it exits the tetramer. Each RuvB hexamer is contacted by two RuvA subunits (via domain III) on 2 adjacent RuvB subunits; this complex drives branch migration. In the full resolvosome a probable DNA-RuvA(4)-RuvB(12)-RuvC(2) complex forms which resolves the HJ.

The protein localises to the cytoplasm. In terms of biological role, the RuvA-RuvB-RuvC complex processes Holliday junction (HJ) DNA during genetic recombination and DNA repair, while the RuvA-RuvB complex plays an important role in the rescue of blocked DNA replication forks via replication fork reversal (RFR). RuvA specifically binds to HJ cruciform DNA, conferring on it an open structure. The RuvB hexamer acts as an ATP-dependent pump, pulling dsDNA into and through the RuvAB complex. HJ branch migration allows RuvC to scan DNA until it finds its consensus sequence, where it cleaves and resolves the cruciform DNA. This is Holliday junction branch migration complex subunit RuvA from Roseobacter denitrificans (strain ATCC 33942 / OCh 114) (Erythrobacter sp. (strain OCh 114)).